Here is a 228-residue protein sequence, read N- to C-terminus: Large ribosomal subunit protein uL23m (228 aa).

Positions 194 to 228 (PEEEGWSEVEENLPLDESAESAAEESSSKGSETRQ) are disordered. The span at 195–216 (EEEGWSEVEENLPLDESAESAA) shows a compositional bias: acidic residues.

It belongs to the universal ribosomal protein uL23 family. In terms of assembly, component of the mitochondrial large ribosomal subunit (mt-LSU). Mature N.crassa 74S mitochondrial ribosomes consist of a small (37S) and a large (54S) subunit. The 37S small subunit contains a 16S ribosomal RNA (16S mt-rRNA) and 32 different proteins. The 54S large subunit contains a 23S rRNA (23S mt-rRNA) and 42 different proteins. uL23m forms the wall of the exit tunnel.

It localises to the mitochondrion. Functionally, component of the mitochondrial ribosome (mitoribosome), a dedicated translation machinery responsible for the synthesis of mitochondrial genome-encoded proteins, including at least some of the essential transmembrane subunits of the mitochondrial respiratory chain. The mitoribosomes are attached to the mitochondrial inner membrane and translation products are cotranslationally integrated into the membrane. The polypeptide is Large ribosomal subunit protein uL23m (mrp20) (Neurospora crassa (strain ATCC 24698 / 74-OR23-1A / CBS 708.71 / DSM 1257 / FGSC 987)).